The following is a 162-amino-acid chain: Phospholipase A and acyltransferase 2 (162 aa).

At 1–133 the chain is on the cytoplasmic side; that stretch reads MALARPRPRL…VSRSDQVTGA (133 aa). Positions 13-129 constitute an LRAT domain; sequence LIEISRFGYA…LRYGVSRSDQ (117 aa). Catalysis depends on residues His-23 and His-35. Cys-113 serves as the catalytic Acyl-thioester intermediate. The helical transmembrane segment at 134 to 154 threads the bilayer; it reads VTTVGVAAGLLAAASLVGILL. The Lumenal segment spans residues 155 to 162; that stretch reads ARSKRERQ.

The protein belongs to the H-rev107 family. Expressed in liver, kidney, small intestine testis and colon. Undetectable in testis, placenta, salivary gland and fetal brain.

It is found in the cytoplasm. It localises to the membrane. It catalyses the reaction a 1,2-diacyl-sn-glycero-3-phosphocholine + H2O = a 1-acyl-sn-glycero-3-phosphocholine + a fatty acid + H(+). It carries out the reaction a 1,2-diacyl-sn-glycero-3-phosphocholine + H2O = a 2-acyl-sn-glycero-3-phosphocholine + a fatty acid + H(+). The enzyme catalyses a 1,2-diacyl-sn-glycero-3-phosphoethanolamine + a 1,2-diacyl-sn-glycero-3-phosphocholine = an N-acyl-1,2-diacyl-sn-glycero-3-phosphoethanolamine + a 1-acyl-sn-glycero-3-phosphocholine + H(+). The catalysed reaction is a 1,2-diacyl-sn-glycero-3-phosphoethanolamine + a 1,2-diacyl-sn-glycero-3-phosphocholine = an N-acyl-1,2-diacyl-sn-glycero-3-phosphoethanolamine + a 2-acyl-sn-glycero-3-phosphocholine + H(+). It catalyses the reaction 1,2-dihexadecanoyl-sn-glycero-3-phosphocholine + H2O = 1-hexadecanoyl-sn-glycero-3-phosphocholine + hexadecanoate + H(+). It carries out the reaction 1,2-dihexadecanoyl-sn-glycero-3-phosphocholine + H2O = 2-hexadecanoyl-sn-glycero-3-phosphocholine + hexadecanoate + H(+). The enzyme catalyses 1-hexadecanoyl-2-(9Z-octadecenoyl)-sn-glycero-3-phosphocholine + H2O = 2-(9Z-octadecenoyl)-sn-glycero-3-phosphocholine + hexadecanoate + H(+). The catalysed reaction is 1-hexadecanoyl-2-(9Z-octadecenoyl)-sn-glycero-3-phosphocholine + H2O = 1-hexadecanoyl-sn-glycero-3-phosphocholine + (9Z)-octadecenoate + H(+). It catalyses the reaction 1-hexadecanoyl-2-(5Z,8Z,11Z,14Z-eicosatetraenoyl)-sn-glycero-3-phosphocholine + H2O = 2-(5Z,8Z,11Z,14Z)-eicosatetraenoyl-sn-glycero-3-phosphocholine + hexadecanoate + H(+). It carries out the reaction 1-hexadecanoyl-2-(9Z,12Z-octadecadienoyl)-sn-glycero-3-phosphoethanolamine + H2O = 1-hexadecanoyl-sn-glycero-3-phosphoethanolamine + (9Z,12Z)-octadecadienoate + H(+). The enzyme catalyses 1-hexadecanoyl-2-(9Z,12Z-octadecadienoyl)-sn-glycero-3-phosphoethanolamine + H2O = 2-(9Z,12Z)-octadecadienoyl-sn-glycero-3-phosphoethanolamine + hexadecanoate + H(+). The catalysed reaction is 1-hexadecanoyl-2-(5Z,8Z,11Z,14Z-eicosatetraenoyl)-sn-glycero-3-phosphoethanolamine + H2O = 1-hexadecanoyl-sn-glycero-3-phosphoethanolamine + (5Z,8Z,11Z,14Z)-eicosatetraenoate + H(+). It catalyses the reaction 1-hexadecanoyl-2-(5Z,8Z,11Z,14Z-eicosatetraenoyl)-sn-glycero-3-phosphoethanolamine + H2O = 2-(5Z,8Z,11Z,14Z)-eicosatetraenoyl-sn-glycero-3-phosphoethanolamine + hexadecanoate + H(+). It carries out the reaction 1,2-di-(9Z-octadecenoyl)-sn-glycero-3-phosphoethanolamine + 1,2-dihexadecanoyl-sn-glycero-3-phosphocholine = N-hexadecanoyl-1,2-di-(9Z-octadecenoyl)-sn-glycero-3-phosphoethanolamine + 2-hexadecanoyl-sn-glycero-3-phosphocholine + H(+). The enzyme catalyses 1,2-di-(9Z-octadecenoyl)-sn-glycero-3-phosphoethanolamine + 1,2-dihexadecanoyl-sn-glycero-3-phosphocholine = N-hexadecanoyl-1,2-di-(9Z-octadecenoyl)-sn-glycero-3-phosphoethanolamine + 1-hexadecanoyl-sn-glycero-3-phosphocholine + H(+). The catalysed reaction is 1-hexanoyl-2-acyl-sn-glycero-3-phosphocholine + H2O = 1-hexanoyl-sn-glycero-3-phosphocholine + a fatty acid + H(+). It catalyses the reaction 1,2-diheptadecanoyl-sn-glycero-3-phosphoethanolamine + 1-(9Z-octadecenoyl)-2-hexadecanoyl-sn-glycero-3-phosphocholine = 1,2-diheptadecanoyl-sn-glycero-3-phospho-N-hexadecanoyl-ethanolamine + 1-(9Z-octadecenoyl)-sn-glycero-3-phosphocholine + H(+). It carries out the reaction 1,2-diheptadecanoyl-sn-glycero-3-phosphoethanolamine + 1-(9Z-octadecenoyl)-2-hexadecanoyl-sn-glycero-3-phosphocholine = 1,2-diheptadecanoyl-sn-glycero-3-phospho-N-(9Z-octadecenoyl)-ethanolamine + 2-hexadecanoyl-sn-glycero-3-phosphocholine + H(+). The enzyme catalyses 1,2-dihexanoyl-sn-glycero-3-phosphocholine + 1,2-diheptanoyl-sn-glycero-3-phosphocholine = 1-heptanoyl-2-hexanoyl-sn-glycero-3-phosphocholine + 1-hexanoyl-2-heptanoyl-sn-glycero-3-phosphocholine. The catalysed reaction is 1,2-diheptanoyl-sn-glycero-3-phosphocholine + 1,2-dihexadecanoyl-sn-glycero-3-phosphocholine = 1-hexadecanoyl-2-heptanoyl-sn-glycero-3-phosphocholine + 1-heptanoyl-2-hexadecanoyl-sn-glycero-3-phosphocholine. It catalyses the reaction 1,2-dihexanoyl-sn-glycero-3-phosphoethanolamine + 1,2-diheptanoyl-sn-glycero-3-phosphocholine = 1-heptanoyl-2-hexanoyl-sn-glycero-3-phosphoethanolamine + 1-hexanoyl-2-heptanoyl-sn-glycero-3-phosphocholine. It carries out the reaction 1-hexanoyl-2-acyl-sn-glycero-3-phosphocholine + H2O = hexanoate + a 2-acyl-sn-glycero-3-phosphocholine + H(+). The enzyme catalyses 1,2-dihexanoyl-sn-glycero-3-phosphoethanolamine + 2-heptanoyl-sn-glycero-3-phosphocholine = hexanoyl-sn-glycero-3-phosphoethanolamine + 1-hexanoyl-2-heptanoyl-sn-glycero-3-phosphocholine. Exhibits both phospholipase A1/2 and acyltransferase activities. Shows phospholipase A1 (PLA1) and A2 (PLA2) activity, catalyzing the calcium-independent release of fatty acids from the sn-1 or sn-2 position of glycerophospholipids. For most substrates, PLA1 activity is much higher than PLA2 activity. Shows O-acyltransferase activity, catalyzing the transfer of a fatty acyl group from glycerophospholipid to the hydroxyl group of lysophospholipid. Shows N-acyltransferase activity, catalyzing the calcium-independent transfer of a fatty acyl group at the sn-1 position of phosphatidylcholine (PC) and other glycerophospholipids to the primary amine of phosphatidylethanolamine (PE), forming N-acylphosphatidylethanolamine (NAPE), which serves as precursor for N-acylethanolamines (NAEs). Catalyzes N-acylation of PE using both sn-1 and sn-2 palmitoyl groups of PC as acyl donor. Exhibits high phospholipase A1/2 activity and low N-acyltransferase activity. This Homo sapiens (Human) protein is Phospholipase A and acyltransferase 2.